A 503-amino-acid polypeptide reads, in one-letter code: Potassium voltage-gated channel subfamily V member 1 (503 aa).

Disordered stretches follow at residues methionine 1–serine 20 and lysine 171–cysteine 192. The Cytoplasmic portion of the chain corresponds to leucine 3 to arginine 213. A compositionally biased stretch (low complexity) spans leucine 10–serine 20. Basic and acidic residues predominate over residues lysine 171 to glutamate 184. The helical transmembrane segment at isoleucine 214–serine 234 threads the bilayer. Residues alanine 235 to asparagine 241 are Extracellular-facing. Residues leucine 242–leucine 262 traverse the membrane as a helical segment. At arginine 263–asparagine 279 the chain is on the cytoplasmic side. Residues isoleucine 280 to glycine 300 traverse the membrane as a helical segment. The Extracellular portion of the chain corresponds to serine 301–arginine 312. The helical; Voltage-sensor transmembrane segment at leucine 313–glycine 334 threads the bilayer. The Cytoplasmic portion of the chain corresponds to leucine 335–glutamate 348. The helical transmembrane segment at valine 349 to phenylalanine 369 threads the bilayer. The short motif at threonine 395 to aspartate 400 is the Selectivity filter element. Residues isoleucine 410–isoleucine 430 form a helical membrane-spanning segment. Residues asparagine 431 to phenylalanine 503 are Cytoplasmic-facing.

Belongs to the potassium channel family. V (TC 1.A.1.2) subfamily. Kv8.1/KCNV1 sub-subfamily. As to quaternary structure, heteromultimer with KCNB1 and KCNB2. Interacts with KCNC4 and KCND1. Detected in brain, in neocortex, olfactory tubercle, hippocampus, dentate gyrus, piriform cortex and amygdala. Detected in Purkinje cells and granular cells of the cerebellum, in hippocampal CA4 neurons and neocortex pyramidal cells.

The protein localises to the cell membrane. Functionally, potassium channel subunit that does not form functional channels by itself. Modulates KCNB1 and KCNB2 channel activity by shifting the threshold for inactivation to more negative values and by slowing the rate of inactivation. Can down-regulate the channel activity of KCNB1, KCNB2, KCNC4 and KCND1, possibly by trapping them in intracellular membranes. The chain is Potassium voltage-gated channel subfamily V member 1 (Kcnv1) from Rattus norvegicus (Rat).